The sequence spans 691 residues: Guanylate cyclase soluble subunit alpha-1 (691 aa).

At S267 the chain carries Phosphoserine. The 128-residue stretch at V480–F607 folds into the Guanylate cyclase domain.

Belongs to the adenylyl cyclase class-4/guanylyl cyclase family. In terms of assembly, the active enzyme is formed by a heterodimer of an alpha and a beta subunit. Heterodimer with GUCY1B1. The cofactor is Mg(2+). Mn(2+) serves as cofactor.

Its subcellular location is the cytoplasm. It catalyses the reaction GTP = 3',5'-cyclic GMP + diphosphate. Its activity is regulated as follows. Activated by nitric oxide in the presence of magnesium or manganese ions. This is Guanylate cyclase soluble subunit alpha-1 (Gucy1a1) from Mus musculus (Mouse).